Reading from the N-terminus, the 313-residue chain is Porphobilinogen deaminase (313 aa).

C242 carries the post-translational modification S-(dipyrrolylmethanemethyl)cysteine.

It belongs to the HMBS family. In terms of assembly, monomer. The cofactor is dipyrromethane.

The enzyme catalyses 4 porphobilinogen + H2O = hydroxymethylbilane + 4 NH4(+). Its pathway is porphyrin-containing compound metabolism; protoporphyrin-IX biosynthesis; coproporphyrinogen-III from 5-aminolevulinate: step 2/4. Its function is as follows. Tetrapolymerization of the monopyrrole PBG into the hydroxymethylbilane pre-uroporphyrinogen in several discrete steps. In Pseudomonas aeruginosa (strain UCBPP-PA14), this protein is Porphobilinogen deaminase.